Reading from the N-terminus, the 473-residue chain is MAVKKYEAGVKEYRQTYWAPEYVPLDSDILACFKITPQPGVDREEAAAAVAAESSTGTWTTVWTDLLTDMDYYKGRAYRIEDVPGDDTSFYAFIAYPIDLFEEGSVVNVFTSLVGNVFGFKAVRALRLEDVRFPLAYVKTCNGPPHGIQVERDKMNKYGRPMLGCTIKPKLGLSAKNYGRAVYECLRGGLDFTKDDENVNSQPFMRWRDRFLFVADAIHTAEAETGERKGHYLNVTAPSPEEMYERAEFAKELNMPIIMHDFLTGGFCANTGLARWCRKTGTLLHIHRAMHAVVDRNPHHGIHFRVLVKALRLSGGDHLHTGTVVGKLEGDRASTQGWVDLLRESFVPEDRSRGIFFDQDWGSMPGVFAVASGGIHVWHMPSLLAIFGDDAVFQFGGGTLGHPWGNAAGAAANRVALEACVEARNEGRDLEREGKDILTNAAKDSPELKIALETWKEIKFEFDTVDKLDVVNR.

Residues Asn116 and Thr166 each coordinate substrate. Lys168 (proton acceptor) is an active-site residue. Lys170 serves as a coordination point for substrate. 3 residues coordinate Mg(2+): Lys194, Asp196, and Glu197. Lys194 bears the N6-carboxylysine mark. The Proton acceptor role is filled by His287. Substrate is bound by residues Arg288, His320, and Ser372.

This sequence belongs to the RuBisCO large chain family. Type I subfamily. Heterohexadecamer of 8 large chains and 8 small chains. Requires Mg(2+) as cofactor.

The catalysed reaction is 2 (2R)-3-phosphoglycerate + 2 H(+) = D-ribulose 1,5-bisphosphate + CO2 + H2O. It carries out the reaction D-ribulose 1,5-bisphosphate + O2 = 2-phosphoglycolate + (2R)-3-phosphoglycerate + 2 H(+). Functionally, ruBisCO catalyzes two reactions: the carboxylation of D-ribulose 1,5-bisphosphate, the primary event in carbon dioxide fixation, as well as the oxidative fragmentation of the pentose substrate. Both reactions occur simultaneously and in competition at the same active site. The polypeptide is Ribulose bisphosphate carboxylase large chain 1 (Acidithiobacillus ferrooxidans (strain ATCC 23270 / DSM 14882 / CIP 104768 / NCIMB 8455) (Ferrobacillus ferrooxidans (strain ATCC 23270))).